A 979-amino-acid chain; its full sequence is MHC class II regulatory factor RFX1 (979 aa).

3 disordered regions span residues 1-136, 181-227, and 370-405; these read MATQ…QVVQ, QSAA…PTGT, and TSTG…STGG. The span at 12-44 shows a compositional bias: pro residues; it reads APPPSQPPQAPPQAQPQPPPPPPPAAPQPPQPP. Over residues 45–73 the composition is skewed to low complexity; it reads TAAATPQPQYVTELQSPQPQAQPPGGQKQ. Serine 60 carries the phosphoserine modification. Positions 81 to 96 are enriched in pro residues; that stretch reads VPAPSQPTGAPTPSPA. Residues 114–126 show a composition bias toward polar residues; it reads ETVSEASPGSTAS. Over residues 127–136 the composition is skewed to low complexity; the sequence is QTGVPTQVVQ. Polar residues-rich tracts occupy residues 190 to 203 and 209 to 220; these read GQVS…QQVH and SPVQANSSSSKT. Positions 370 to 379 are enriched in low complexity; the sequence is TSTGAGASNS. Over residues 380 to 405 the composition is skewed to gly residues; that stretch reads SGGGGSGGGGGGGGGGGGGGSGSTGG. The RFX-type winged-helix DNA-binding region spans 438-513; the sequence is TVQWLLDNYE…YHYYGLRIKA (76 aa). Residues 744-979 form a necessary for dimerization region; the sequence is FAQTLRRYTS…GLFVQALPSS (236 aa). A disordered region spans residues 915–960; it reads SLNPLDPDKDEEEEEEEESEDELPQDISLAAGGESPALGPETLEPP. The segment covering 922–938 has biased composition (acidic residues); it reads DKDEEEEEEEESEDELP. 2 positions are modified to phosphoserine: serine 978 and serine 979.

It belongs to the RFX family. As to quaternary structure, homodimer; binds DNA as a homodimer. Heterodimer; heterodimerizes with RFX2 and RFX3.

The protein resides in the nucleus. Regulatory factor essential for MHC class II genes expression. Binds to the X boxes of MHC class II genes. Also binds to an inverted repeat (ENH1) required for hepatitis B virus genes expression and to the most upstream element (alpha) of the RPL30 promoter. The sequence is that of MHC class II regulatory factor RFX1 (RFX1) from Homo sapiens (Human).